The sequence spans 380 residues: Deoxyguanosinetriphosphate triphosphohydrolase-like protein (380 aa).

Positions 1 to 28 (MYAPYATMPDRSRGRAVPEEESSFRSPF) are disordered. The HD domain maps to 62–198 (RLTHSIEVGQ…AALADDIAYN (137 aa)).

This sequence belongs to the dGTPase family. Type 2 subfamily.

The sequence is that of Deoxyguanosinetriphosphate triphosphohydrolase-like protein from Ruegeria sp. (strain TM1040) (Silicibacter sp.).